We begin with the raw amino-acid sequence, 477 residues long: tRNA-2-methylthio-N(6)-dimethylallyladenosine synthase (477 aa).

The 118-residue stretch at 3–120 (KKLYIKTWGC…LPEMINELKG (118 aa)) folds into the MTTase N-terminal domain. The [4Fe-4S] cluster site is built by cysteine 12, cysteine 49, cysteine 83, cysteine 157, cysteine 161, and cysteine 164. A Radical SAM core domain is found at 143 to 375 (RAEGPTAFVS…QQRITQQALR (233 aa)). Residues 378-441 (RHMVGTEQRI…TNSLRGEVVR (64 aa)) form the TRAM domain.

It belongs to the methylthiotransferase family. MiaB subfamily. Monomer. Requires [4Fe-4S] cluster as cofactor.

Its subcellular location is the cytoplasm. The enzyme catalyses N(6)-dimethylallyladenosine(37) in tRNA + (sulfur carrier)-SH + AH2 + 2 S-adenosyl-L-methionine = 2-methylsulfanyl-N(6)-dimethylallyladenosine(37) in tRNA + (sulfur carrier)-H + 5'-deoxyadenosine + L-methionine + A + S-adenosyl-L-homocysteine + 2 H(+). Its function is as follows. Catalyzes the methylthiolation of N6-(dimethylallyl)adenosine (i(6)A), leading to the formation of 2-methylthio-N6-(dimethylallyl)adenosine (ms(2)i(6)A) at position 37 in tRNAs that read codons beginning with uridine. In Alteromonas mediterranea (strain DSM 17117 / CIP 110805 / LMG 28347 / Deep ecotype), this protein is tRNA-2-methylthio-N(6)-dimethylallyladenosine synthase.